The primary structure comprises 748 residues: MAKPAGDAAVGSRSGELFLPSVSSSATSPAPSAAPAPASVSLLSLNGEAPLIRGLSLVSQAPGEALAWAPRTSCPGENTSSGGKVSPYSLEISEKLFCSACDQIFQNHQEQREHYKLDWHRFNLKQRLKNKPLLSASDFEQQSSTGDLSSISGSDDTDSSSEEDLLPLDEGRAESEKPNRPPGFYPHRVLFKNAQGQFLYAYRCVLGPHQIPPEKAELLLQNLQNGGPRYYVVLMAAAGHFAGAIFQGREVVAHKTFHRYTVRAKRGTAQGLQDAHGRASRSAGANLRRYNEAMLYKDVRNLLAGPIWSKALGEAETVLFRAPRSGRSLFFGGQGAPLQRDDPRLWDIPLTTRRPTFGELQRVLHKLTTLQVYDEDPREMVRFHSPETHWKPVREERKKDTEKEKTKVPSDANKPLGQDEEPLKQGSESQEEDGSEVELELVELTLGTLDLREFEVLPKRRRRRKKKERSQEQQCGAHGPLPQQPQDEPFSQPTQEVETPLDTLVYEAKAPGQPELWDTLLAACRAGEVEVLKLQLATGLVDPGVKSLLNAPLGSGGFTLLHAAAAAGRGLVVRLLLEAGADPTVQDSRARPPYTVAADKSTRNEFRRFMEKNLDAYDYNKARVPGPLTQEMEARQATRKKEQKAARRQREQQQRKQREQEEQEQEEQRRFAALSDREKRALAAERRLAAQLGAPSPPVPDSAVASAGRCWSCGVSLQGLIPFHYLDFSFCSTRCLRDHRSQAGRPSS.

A C2H2-type zinc finger spans residues 96-120 (LFCSACDQIFQNHQEQREHYKLDWH). A disordered region spans residues 135-185 (SASDFEQQSSTGDLSSISGSDDTDSSSEEDLLPLDEGRAESEKPNRPPGFY). The segment covering 143–154 (SSTGDLSSISGS) has biased composition (low complexity). The span at 155–167 (DDTDSSSEEDLLP) shows a compositional bias: acidic residues. Positions 169–179 (DEGRAESEKPN) are enriched in basic and acidic residues. Positions 227–370 (GPRYYVVLMA…QRVLHKLTTL (144 aa)) constitute a VLRF1 domain. The active site involves glutamine 270. Phosphoserine is present on residues serine 282 and serine 385. Residues 383–408 (FHSPETHWKPVREERKKDTEKEKTKV) show a composition bias toward basic and acidic residues. 2 disordered regions span residues 383 to 438 (FHSP…SEVE) and 460 to 497 (RRRR…TQEV). Over residues 429–438 (SQEEDGSEVE) the composition is skewed to acidic residues. The span at 484–497 (QPQDEPFSQPTQEV) shows a compositional bias: polar residues. An ANK 1 repeat occupies 515 to 545 (ELWDTLLAACRAGEVEVLKLQLATGLVDPGV). Residue serine 555 is modified to Phosphoserine. The stretch at 556 to 585 (GGFTLLHAAAAAGRGLVVRLLLEAGADPTV) is one ANK 2 repeat. The disordered stretch occupies residues 621-677 (KARVPGPLTQEMEARQATRKKEQKAARRQREQQQRKQREQEEQEQEEQRRFAALSDR). Residues 628–681 (LTQEMEARQATRKKEQKAARRQREQQQRKQREQEEQEQEEQRRFAALSDREKRA) adopt a coiled-coil conformation. Threonine 629 carries the post-translational modification Phosphothreonine. Residues 632–677 (MEARQATRKKEQKAARRQREQQQRKQREQEEQEQEEQRRFAALSDR) are compositionally biased toward basic and acidic residues. Residues 654–666 (QRKQREQEEQEQE) are VCP/p97-interacting motif (VIM). Serine 702 is modified (phosphoserine).

It belongs to the ANKZF1/VMS1 family. As to quaternary structure, interacts (via VIM motif) with VCP.

The protein resides in the cytoplasm. In terms of biological role, endonuclease that cleaves polypeptidyl-tRNAs downstream of the ribosome-associated quality control (RQC) pathway to release incompletely synthesized polypeptides for degradation. The RQC pathway disassembles aberrantly stalled translation complexes to recycle or degrade the constituent parts. ANKZF1 acts downstream disassembly of stalled ribosomes and specifically cleaves off the terminal 3'-CCA nucleotides universal to all tRNAs from polypeptidyl-tRNAs, releasing (1) ubiquitinated polypeptides from 60S ribosomal subunit for degradation and (2) cleaved tRNAs. ANKZF1-cleaved tRNAs are then repaired and recycled by ELAC1 and TRNT1. Also plays a role in the cellular response to hydrogen peroxide and in the maintenance of mitochondrial integrity under conditions of cellular stress. In Mus musculus (Mouse), this protein is tRNA endonuclease ANKZF1.